A 465-amino-acid chain; its full sequence is Antithrombin-III (465 aa).

Positions 1 to 32 (MISNGIGTVTAGKRSICLLPLLLIGLWGCVTC) are cleaved as a signal peptide. Intrachain disulfides connect C41-C161 and C54-C128. Position 64 is a phosphothreonine (T64). A Phosphoserine modification is found at S69. W82 lines the heparin pocket. N129 is a glycosylation site (N-linked (GlcNAc...) asparagine). Heparin is bound at residue R162. N168 carries an N-linked (GlcNAc...) asparagine glycan. R178 provides a ligand contact to heparin. N188 and N225 each carry an N-linked (GlcNAc...) asparagine glycan. Cysteines 280 and 463 form a disulfide.

It belongs to the serpin family. As to quaternary structure, forms protease inhibiting heterodimer with TMPRSS7. In terms of processing, phosphorylated by FAM20C in the extracellular medium. As to expression, plasma.

It is found in the secreted. Its subcellular location is the extracellular space. In terms of biological role, most important serine protease inhibitor in plasma that regulates the blood coagulation cascade. AT-III inhibits thrombin, matriptase-3/TMPRSS7, as well as factors IXa, Xa and XIa. Its inhibitory activity is greatly enhanced in the presence of heparin. This Bos taurus (Bovine) protein is Antithrombin-III (SERPINC1).